The following is a 113-amino-acid chain: Ig kappa chain V-II region MOPC 511 (113 aa).

Residues 1-23 (DIVITQDELSKPVTSGESVSISC) are framework-1. Cys-23 and Cys-93 are oxidised to a cystine. A complementarity-determining-1 region spans residues 24–39 (RSSKSLLYKDGKTYLN). The framework-2 stretch occupies residues 40–54 (WFLQGPQQSPRLLIY). Residues 55–61 (LMSTRAS) form a complementarity-determining-2 region. Residues 62–93 (GVSDRFSGSGSGTDFTLEISRVKAEDVGVYYC) are framework-3. The tract at residues 94 to 102 (QQLVEYPLT) is complementarity-determining-3. Residues 103 to 112 (FGAGTKLELK) are framework-4.

The protein is Ig kappa chain V-II region MOPC 511 of Mus musculus (Mouse).